The chain runs to 197 residues: Putative carbonic anhydrase YvdA (197 aa).

Residues Cys41, Asp43, His99, and Cys102 each contribute to the Zn(2+) site.

It belongs to the beta-class carbonic anhydrase family. Requires Zn(2+) as cofactor.

The enzyme catalyses hydrogencarbonate + H(+) = CO2 + H2O. In terms of biological role, reversible hydration of carbon dioxide. This is Putative carbonic anhydrase YvdA (yvdA) from Bacillus subtilis (strain 168).